Reading from the N-terminus, the 317-residue chain is Methionyl-tRNA formyltransferase (317 aa).

Residue serine 112–proline 115 coordinates (6S)-5,6,7,8-tetrahydrofolate.

The protein belongs to the Fmt family.

The enzyme catalyses L-methionyl-tRNA(fMet) + (6R)-10-formyltetrahydrofolate = N-formyl-L-methionyl-tRNA(fMet) + (6S)-5,6,7,8-tetrahydrofolate + H(+). Attaches a formyl group to the free amino group of methionyl-tRNA(fMet). The formyl group appears to play a dual role in the initiator identity of N-formylmethionyl-tRNA by promoting its recognition by IF2 and preventing the misappropriation of this tRNA by the elongation apparatus. The polypeptide is Methionyl-tRNA formyltransferase (Geobacter sulfurreducens (strain ATCC 51573 / DSM 12127 / PCA)).